Consider the following 205-residue polypeptide: Small ribosomal subunit protein uS4 (205 aa).

Positions 18–46 (NIWGRPKSPVNRREYGPGQHGQRRKGKLS) are disordered. Residues 94-154 (RRLDAVVYRA…EASKQLAHVL (61 aa)) enclose the S4 RNA-binding domain.

This sequence belongs to the universal ribosomal protein uS4 family. Part of the 30S ribosomal subunit. Contacts protein S5. The interaction surface between S4 and S5 is involved in control of translational fidelity.

Functionally, one of the primary rRNA binding proteins, it binds directly to 16S rRNA where it nucleates assembly of the body of the 30S subunit. With S5 and S12 plays an important role in translational accuracy. The chain is Small ribosomal subunit protein uS4 from Bradyrhizobium diazoefficiens (strain JCM 10833 / BCRC 13528 / IAM 13628 / NBRC 14792 / USDA 110).